The sequence spans 469 residues: Neuraminidase (469 aa).

At 1–6 the chain is on the intravirion side; sequence MNPNQK. A helical membrane pass occupies residues 7-27; the sequence is IITIGSICMVVGIISLILQIG. Residues 11–33 form an involved in apical transport and lipid raft association region; that stretch reads GSICMVVGIISLILQIGNIISIW. Over 28 to 469 the chain is Virion surface; that stretch reads NIISIWISHS…GAELPFTIDK (442 aa). The segment at 36–90 is hypervariable stalk region; that stretch reads HSIQTGSQNHTGICNQSIITYKNSTWVNQTYVNISNTNVVAGKGTTPVILAGNSS. 6 N-linked (GlcNAc...) asparagine; by host glycosylation sites follow: asparagine 44, asparagine 50, asparagine 58, asparagine 63, asparagine 68, and asparagine 88. The segment at 91-469 is head of neuraminidase; the sequence is LCPIRGWAIY…GAELPFTIDK (379 aa). 8 disulfide bridges follow: cysteine 92-cysteine 417, cysteine 124-cysteine 129, cysteine 184-cysteine 231, cysteine 233-cysteine 238, cysteine 279-cysteine 292, cysteine 281-cysteine 290, cysteine 318-cysteine 335, and cysteine 421-cysteine 446. Arginine 118 serves as a coordination point for substrate. A glycan (N-linked (GlcNAc...) asparagine; by host) is linked at asparagine 146. The active-site Proton donor/acceptor is the aspartate 151. Position 152 (arginine 152) interacts with substrate. An N-linked (GlcNAc...) asparagine; by host glycan is attached at asparagine 235. 277 to 278 is a binding site for substrate; sequence EE. Arginine 293 is a substrate binding site. Aspartate 294, glycine 298, aspartate 324, and asparagine 344 together coordinate Ca(2+). An N-linked (GlcNAc...) asparagine; by host glycan is attached at asparagine 365. Arginine 368 contributes to the substrate binding site. Catalysis depends on tyrosine 402, which acts as the Nucleophile.

It belongs to the glycosyl hydrolase 34 family. In terms of assembly, homotetramer. The cofactor is Ca(2+). In terms of processing, N-glycosylated.

It localises to the virion membrane. The protein resides in the host apical cell membrane. The enzyme catalyses Hydrolysis of alpha-(2-&gt;3)-, alpha-(2-&gt;6)-, alpha-(2-&gt;8)- glycosidic linkages of terminal sialic acid residues in oligosaccharides, glycoproteins, glycolipids, colominic acid and synthetic substrates.. Inhibited by the neuraminidase inhibitors zanamivir (Relenza) and oseltamivir (Tamiflu). These drugs interfere with the release of progeny virus from infected cells and are effective against all influenza strains. Resistance to neuraminidase inhibitors is quite rare. Functionally, catalyzes the removal of terminal sialic acid residues from viral and cellular glycoconjugates. Cleaves off the terminal sialic acids on the glycosylated HA during virus budding to facilitate virus release. Additionally helps virus spread through the circulation by further removing sialic acids from the cell surface. These cleavages prevent self-aggregation and ensure the efficient spread of the progeny virus from cell to cell. Otherwise, infection would be limited to one round of replication. Described as a receptor-destroying enzyme because it cleaves a terminal sialic acid from the cellular receptors. May facilitate viral invasion of the upper airways by cleaving the sialic acid moieties on the mucin of the airway epithelial cells. Likely to plays a role in the budding process through its association with lipid rafts during intracellular transport. May additionally display a raft-association independent effect on budding. Plays a role in the determination of host range restriction on replication and virulence. Sialidase activity in late endosome/lysosome traffic seems to enhance virus replication. The sequence is that of Neuraminidase from Influenza A virus (strain A/USA:Huston/AA/1945 H1N1).